Here is a 1755-residue protein sequence, read N- to C-terminus: Transposon Ty1-DR6 Gag-Pol polyprotein (1755 aa).

Composition is skewed to polar residues over residues 1–23, 48–60, and 127–152; these read MESQ…SVTS, TKAN…TPAS, and QSQF…GNTF. 3 disordered regions span residues 1 to 93, 126 to 174, and 352 to 421; these read MESQ…MMTQ, PQSQ…PPPM, and GSRN…SKST. Low complexity predominate over residues 153–165; the sequence is TDSSSADSDMTST. The RNA-binding stretch occupies residues 299-401; sequence NNGIHINNKV…NSKSKTARAH (103 aa). Residues 402 to 418 are compositionally biased toward low complexity; sequence NVSTSNNSPSTDNDSIS. Serine 416 is subject to Phosphoserine. Aspartate 461 functions as the For protease activity; shared with dimeric partner in the catalytic mechanism. The tract at residues 583–640 is integrase-type zinc finger-like; the sequence is NVHTSESTRKYPYPFIHRMLAHANAQTIRYSLKNNTITYFNESDVDWSSAIDYQCPDC. The 176-residue stretch at 660–835 folds into the Integrase catalytic domain; sequence NSYEPFQYLH…AGLDISTLLP (176 aa). Mg(2+) is bound by residues aspartate 671 and aspartate 736. Disordered stretches follow at residues 956–1087, 1092–1111, and 1130–1187; these read SKAV…ETEK, RSPS…NIVP, and DLPL…DNET. Residues 960-969 are compositionally biased toward low complexity; it reads SPTDSTPPST. Polar residues predominate over residues 1005–1015; sequence STPQISNIEST. Positions 1038–1053 are enriched in basic and acidic residues; sequence ESSHASKSKDFRHSDS. Composition is skewed to polar residues over residues 1054 to 1082 and 1101 to 1111; these read YSEN…QISD and PENNSSHNIVP. A Bipartite nuclear localization signal motif is present at residues 1178-1212; the sequence is KKRSLEDNETEIKVSRDTWNTKNMRSLEPPRSKKR. One can recognise a Reverse transcriptase Ty1/copia-type domain in the interval 1338–1476; that stretch reads NNYYITQLDI…DILGLEIKYQ (139 aa). Mg(2+) is bound by residues aspartate 1346, aspartate 1427, aspartate 1428, aspartate 1610, glutamate 1652, and aspartate 1685. The region spanning 1610–1752 is the RNase H Ty1/copia-type domain; it reads DASYGNQPYY…IKTFKLLTNK (143 aa).

The capsid protein forms a homotrimer, from which the VLPs are assembled. The protease is a homodimer, whose active site consists of two apposed aspartic acid residues. Initially, virus-like particles (VLPs) are composed of the structural unprocessed proteins Gag and Gag-Pol, and also contain the host initiator methionine tRNA (tRNA(i)-Met) which serves as a primer for minus-strand DNA synthesis, and a dimer of genomic Ty RNA. Processing of the polyproteins occurs within the particle and proceeds by an ordered pathway, called maturation. First, the protease (PR) is released by autocatalytic cleavage of the Gag-Pol polyprotein yielding capsid protein p45 and a Pol-p154 precursor protein. This cleavage is a prerequisite for subsequent processing of Pol-p154 at the remaining sites to release the mature structural and catalytic proteins. Maturation takes place prior to the RT reaction and is required to produce transposition-competent VLPs.

The protein resides in the cytoplasm. Its subcellular location is the nucleus. The catalysed reaction is DNA(n) + a 2'-deoxyribonucleoside 5'-triphosphate = DNA(n+1) + diphosphate. It catalyses the reaction Endonucleolytic cleavage to 5'-phosphomonoester.. Capsid protein (CA) is the structural component of the virus-like particle (VLP), forming the shell that encapsulates the retrotransposons dimeric RNA genome. The particles are assembled from trimer-clustered units and there are holes in the capsid shells that allow for the diffusion of macromolecules. CA also has nucleocapsid-like chaperone activity, promoting primer tRNA(i)-Met annealing to the multipartite primer-binding site (PBS), dimerization of Ty1 RNA and initiation of reverse transcription. Functionally, the aspartyl protease (PR) mediates the proteolytic cleavages of the Gag and Gag-Pol polyproteins after assembly of the VLP. Its function is as follows. Reverse transcriptase/ribonuclease H (RT) is a multifunctional enzyme that catalyzes the conversion of the retro-elements RNA genome into dsDNA within the VLP. The enzyme displays a DNA polymerase activity that can copy either DNA or RNA templates, and a ribonuclease H (RNase H) activity that cleaves the RNA strand of RNA-DNA heteroduplexes during plus-strand synthesis and hydrolyzes RNA primers. The conversion leads to a linear dsDNA copy of the retrotransposon that includes long terminal repeats (LTRs) at both ends. In terms of biological role, integrase (IN) targets the VLP to the nucleus, where a subparticle preintegration complex (PIC) containing at least integrase and the newly synthesized dsDNA copy of the retrotransposon must transit the nuclear membrane. Once in the nucleus, integrase performs the integration of the dsDNA into the host genome. This is Transposon Ty1-DR6 Gag-Pol polyprotein (TY1B-DR6) from Saccharomyces cerevisiae (strain ATCC 204508 / S288c) (Baker's yeast).